A 170-amino-acid chain; its full sequence is Photosystem II extrinsic protein V (170 aa).

A signal peptide spans 1 to 33 (MASFFSTLRRSLNRLLIALPVLLGLMISTPAQA). Heme c contacts are provided by Cys-70, Cys-73, His-74, and His-125.

Belongs to the cytochrome c family. PsbV subfamily. PSII is composed of 1 copy each of membrane proteins PsbA, PsbB, PsbC, PsbD, PsbE, PsbF, PsbH, PsbI, PsbJ, PsbK, PsbL, PsbM, PsbT, PsbX, PsbY, PsbZ, Psb30/Ycf12, peripheral proteins PsbO, CyanoQ (PsbQ), PsbU, PsbV and a large number of cofactors. It forms dimeric complexes. Heme c is required as a cofactor.

Its subcellular location is the cellular thylakoid membrane. Its function is as follows. One of the extrinsic, lumenal subunits of photosystem II (PSII). PSII is a light-driven water plastoquinone oxidoreductase, using light energy to abstract electrons from H(2)O, generating a proton gradient subsequently used for ATP formation. The extrinsic proteins stabilize the structure of photosystem II oxygen-evolving complex (OEC), the ion environment of oxygen evolution and protect the OEC against heat-induced inactivation. Low-potential cytochrome c that plays a role in the OEC of PSII. In Synechococcus sp. (strain CC9311), this protein is Photosystem II extrinsic protein V.